The primary structure comprises 352 residues: DNA polymerase IV (352 aa).

In terms of domain architecture, UmuC spans 6-186 (IIHIDMDAFY…LPLGKIPGVG (181 aa)). Mg(2+)-binding residues include Asp-10 and Asp-104. Residue Glu-105 is part of the active site.

Belongs to the DNA polymerase type-Y family. As to quaternary structure, monomer. It depends on Mg(2+) as a cofactor.

It is found in the cytoplasm. The enzyme catalyses DNA(n) + a 2'-deoxyribonucleoside 5'-triphosphate = DNA(n+1) + diphosphate. In terms of biological role, poorly processive, error-prone DNA polymerase involved in untargeted mutagenesis. Copies undamaged DNA at stalled replication forks, which arise in vivo from mismatched or misaligned primer ends. These misaligned primers can be extended by PolIV. Exhibits no 3'-5' exonuclease (proofreading) activity. May be involved in translesional synthesis, in conjunction with the beta clamp from PolIII. The chain is DNA polymerase IV from Neisseria meningitidis serogroup A / serotype 4A (strain DSM 15465 / Z2491).